The following is a 606-amino-acid chain: Envelope glycoprotein gp95 (606 aa).

The first 62 residues, Met1–Ala62, serve as a signal peptide directing secretion. Topologically, residues Asp63–Leu552 are extracellular. N-linked (GlcNAc...) asparagine; by host glycans are attached at residues Asn79, Asn120, Asn141, Asn158, and Asn178. 7 cysteine pairs are disulfide-bonded: Cys87/Cys499, Cys121/Cys152, Cys192/Cys245, Cys258/Cys267, Cys353/Cys370, Cys410/Cys446, and Cys491/Cys498. The binding to host receptor stretch occupies residues Ile185 to Glu226. A glycan (N-linked (GlcNAc...) asparagine; by host) is linked at Asn257. The interval Val261–Lys288 is binding to host receptor. Asn291, Asn297, Asn307, and Asn315 each carry an N-linked (GlcNAc...) asparagine; by host glycan. Residue Asn391 is glycosylated (N-linked (GlcNAc...) asparagine; by host). Residues Gly418–Leu438 form a fusion peptide region. A coiled-coil region spans residues Ala435–Leu485. Residue Asn453 is glycosylated (N-linked (GlcNAc...) asparagine; by host). Residues Leu474–Gly490 form an immunosuppression region. Asn501 carries N-linked (GlcNAc...) asparagine; by host glycosylation. Residues Ser503–Trp533 are a coiled coil. A helical membrane pass occupies residues Leu553–Val573. S-palmitoyl cysteine; by host attachment occurs at residues Cys565 and Cys568. Residues Cys574 to Val606 lie on the Cytoplasmic side of the membrane.

This sequence belongs to the Alpharetroviruses envelope glycoprotein family. As to quaternary structure, heterodimer with the transmembrane protein. The mature envelope protein (Env) consists of a trimer of SU-TM heterodimers attached by a labile interchain disulfide bond. Interacts with the host cell entry receptor TVA isoforms pg900 and pg800; this interaction allows the viral attachment. In terms of assembly, heterodimer with the surface protein. The mature envelope protein (Env) consists of a trimer of SU-TM heterodimers attached by a labile interchain disulfide bond. Specific enzymatic cleavages in vivo yield mature proteins. Envelope glycoproteins are synthesized as an inactive precursor that is N-glycosylated and processed likely by host cell furin or by a furin-like protease in the Golgi to yield the mature SU and TM proteins. The cleavage site between SU and TM requires the minimal sequence [KR]-X-[KR]-R. Post-translationally, the transmembrane protein is palmitoylated. Palmitoylation is necessary for glycoprotein function and infectivity.

The protein resides in the virion membrane. It localises to the host cell membrane. Functionally, the surface protein (SU) attaches the virus to the host cell entry receptor TVA. This interaction triggers the refolding of the transmembrane protein (TM) thereby unmasking its fusion peptide and the formation of a reactive thiolate on Cys-100 to activate its fusogenic potential. Fusion occurs at the host cell plasma membrane. In terms of biological role, the transmembrane protein (TM) acts as a class I viral fusion protein. Under the current model, the protein has at least 3 conformational states: pre-fusion native state, pre-hairpin intermediate state, and post-fusion hairpin state. During viral and target cell membrane fusion, the coiled coil regions (heptad repeats) assume a trimer-of-hairpins structure, positioning the fusion peptide in close proximity to the C-terminal region of the ectodomain. The formation of this structure appears to drive apposition and subsequent fusion of viral and target cell membranes. Membranes fusion leads to delivery of the nucleocapsid into the cytoplasm. The protein is Envelope glycoprotein gp95 (env) of Avian leukosis virus subgroup A (isolate RSA) (ALV-A RSA).